We begin with the raw amino-acid sequence, 440 residues long: GTPase Der (440 aa).

EngA-type G domains are found at residues 3 to 168 and 177 to 353; these read PIIA…GKMD and LKLA…EEYT. Residues 9–16, 56–60, 119–122, 183–190, 230–234, and 295–298 each bind GTP; these read GRPNVGKS, DTGGL, NKID, GKPNAGKS, DTAGI, and NKWD. A KH-like domain is found at 354–438; the sequence is KRISTGLLNT…PIMISFENKS (85 aa).

Belongs to the TRAFAC class TrmE-Era-EngA-EngB-Septin-like GTPase superfamily. EngA (Der) GTPase family. As to quaternary structure, associates with the 50S ribosomal subunit.

Functionally, GTPase that plays an essential role in the late steps of ribosome biogenesis. The sequence is that of GTPase Der from Fusobacterium nucleatum subsp. nucleatum (strain ATCC 25586 / DSM 15643 / BCRC 10681 / CIP 101130 / JCM 8532 / KCTC 2640 / LMG 13131 / VPI 4355).